A 97-amino-acid chain; its full sequence is Down syndrome critical region protein 8 (97 aa).

In terms of tissue distribution, expressed in numerous tissues; not found in breast, heart, small intestine and liver. Isoform 1: Predominantly expressed in the testis. Isoform 3: Predominantly expressed in the testis, at lower level in the placenta, during malignant progression of melanocytic tumors and in several tumors of varying origins. Isoform 4: Predominantly expressed in the testis, at lower level in the placenta, during malignant progression of melanocytic tumors and in several tumors of varying origins. Isoform 5: Predominantly expressed in the testis. Isoform 6: Predominantly expressed in the testis.

This is Down syndrome critical region protein 8 from Homo sapiens (Human).